Consider the following 93-residue polypeptide: MDAKVVAVLALVLAALCLSDGKPVSLSYRCPCRFFESHVARANVKHLKILNTPNCALQIVARLKNNNRQVCIDPKLKWIQEYLEKALNKRFKM.

The N-terminal stretch at 1-21 (MDAKVVAVLALVLAALCLSDG) is a signal peptide. The Receptor activation motif signature appears at 22–23 (KP). Residues 29–33 (RCPCR) are receptor and heparin binding. Disulfide bonds link Cys-30–Cys-55 and Cys-32–Cys-71. Receptor binding stretches follow at residues 39 to 41 (VAR), 48 to 50 (KIL), and 60 to 70 (VARLKNNNRQV). Heparin is bound by residues 41–51 (RANVKHLKILN), Arg-62, Gln-69, and Lys-85.

It belongs to the intercrine alpha (chemokine CxC) family. Monomer or homodimer; in equilibrium. Dimer formation is induced by non acidic pH and the presence of multivalent anions, and by binding to CXCR4 or heparin. Monomeric form is required for full chemotactic activity and resistance to ischemia/reperfusion injury, whereas the dimeric form acts as a partial agonist of CXCR4, stimulating Ca2+ mobilization but with no chemotactic activity and instead acts as a selective antagonist that blocks chemotaxis induced by the monomeric form. Interacts with the N-terminus of ACKR3. Interacts with integrin subunit ITGB3 (via the allosteric site (site 2)). Interacts with TNFAIP6 (via Link domain).

It localises to the secreted. In terms of biological role, chemoattractant active on T-lymphocytes and monocytes but not neutrophils. Activates the C-X-C chemokine receptor CXCR4 to induce a rapid and transient rise in the level of intracellular calcium ions and chemotaxis. Also binds to atypical chemokine receptor ACKR3, which activates the beta-arrestin pathway and acts as a scavenger receptor for SDF-1. Acts as a positive regulator of monocyte migration and a negative regulator of monocyte adhesion via the LYN kinase. Binds to the allosteric site (site 2) of integrins and activates integrins ITGAV:ITGB3, ITGA4:ITGB1 and ITGA5:ITGB1 in a CXCR4-independent manner. Stimulates migration of monocytes and T-lymphocytes through its receptors, CXCR4 and ACKR3, and decreases monocyte adherence to surfaces coated with ICAM-1, a ligand for beta-2 integrins. SDF1A/CXCR4 signaling axis inhibits beta-2 integrin LFA-1 mediated adhesion of monocytes to ICAM-1 through LYN kinase. Plays a protective role after myocardial infarction. Has several critical functions during embryonic development; required for B-cell lymphopoiesis, myelopoiesis in bone marrow and heart ventricular septum formation. Stimulates the proliferation of bone marrow-derived B-cell progenitors in the presence of IL7 as well as growth of stromal cell-dependent pre-B-cells. This chain is Stromal cell-derived factor 1 (CXCL12), found in Felis catus (Cat).